Consider the following 636-residue polypeptide: DNA-dependent metalloprotease SPRTN (636 aa).

Residues 19 to 42 (QETPAAGWPDEDCPSSKRRRVDPS) are disordered. In terms of domain architecture, SprT-like spans 76–183 (RAMFLQFNDK…ASGTNITIYH (108 aa)). Position 141 (histidine 141) interacts with Zn(2+). Residue glutamate 142 is part of the active site. Residues histidine 145 and histidine 160 each contribute to the Zn(2+) site. Disordered regions lie at residues 238–382 (TYTK…GKQR) and 398–430 (RGAS…PSGK). Positions 241 to 268 (KIKEPENYGKTGKSDKQRDKMPATEMPK) are enriched in basic and acidic residues. Low complexity predominate over residues 272-281 (PPSSTSSSGS). The SHP-box motif lies at 290–298 (FSGRGFVLG). Over residues 302–311 (QIPTNKQIQS) the composition is skewed to polar residues. Residues 313–327 (PKAPPEPLHSPPDSP) show a composition bias toward pro residues. Polar residues predominate over residues 341 to 374 (RLSSGTSNIPRKRSVGNTNAFINVNGSPVRISNG). Low complexity predominate over residues 399-416 (GASAVGSSKSSTDASTAD). The short motif at 451-458 (ESNISKYF) is the PIP-box element. Residues 473 to 608 (TFGSPQKSAI…VRDQQANNPP (136 aa)) are disordered. Composition is skewed to polar residues over residues 492–523 (FGSN…SGSS) and 545–554 (SPRTSGTTPS). Positions 535–566 (SNFPSPRNIGSPRTSGTTPSGAKKRSWEEHNS) match the Nuclear localization signal motif. Composition is skewed to basic and acidic residues over residues 559-570 (RSWEEHNSERVF) and 584-593 (TDKKREEVRS). The UBZ4-type zinc-finger motif lies at 612-636 (TVHCPVCHIRLPESTINDHLDSCLL). Residues cysteine 615, cysteine 618, histidine 630, and cysteine 634 each coordinate Zn(2+).

It belongs to the Spartan family. As to quaternary structure, homodimer. Zn(2+) is required as a cofactor. In terms of processing, autocatalytically cleaved in response to double-stranded DNA-binding: autocatalytic cleavage takes place in trans and leads to inactivation.

Its subcellular location is the nucleus. The protein resides in the chromosome. Its activity is regulated as follows. DNA-binding activates the protease activity: single-stranded DNA-binding specifically activates ability to cleave covalent DNA-protein cross-links (DPCs). In contrast, double-stranded DNA-binding specifically activates autocatalytic cleavage, and subsequent inactivation. In terms of biological role, DNA-dependent metalloendopeptidase that mediates the proteolytic cleavage of covalent DNA-protein cross-links (DPCs) during DNA synthesis, thereby playing a key role in maintaining genomic integrity. DPCs are highly toxic DNA lesions that interfere with essential chromatin transactions, such as replication and transcription, and which are induced by reactive agents, such as UV light or formaldehyde. Associates with the DNA replication machinery and specifically removes DPCs during DNA synthesis. Catalyzes proteolytic cleavage of the hmces DNA-protein cross-link following unfolding by the brip1/fancj helicase. Acts as a pleiotropic protease for DNA-binding proteins cross-linked with DNA, such as top1, top2a, histones H3 and H4. Mediates degradation of DPCs that are not ubiquitinated, while it is not able to degrade ubiquitinated DPCs. SPRTN activation requires polymerase collision with DPCs followed by helicase bypass of DPCs. May also act as a 'reader' of ubiquitinated pcna: facilitates chromatin association of rad18 and is required for efficient pcna monoubiquitination, promoting a feed-forward loop to enhance pcna ubiquitination and translesion DNA synthesis. Acts as a regulator of translesion DNA synthesis by recruiting vcp/p97 to sites of DNA damage. This chain is DNA-dependent metalloprotease SPRTN, found in Danio rerio (Zebrafish).